A 423-amino-acid chain; its full sequence is Histidine--tRNA ligase (423 aa).

It belongs to the class-II aminoacyl-tRNA synthetase family. As to quaternary structure, homodimer.

The protein localises to the cytoplasm. It carries out the reaction tRNA(His) + L-histidine + ATP = L-histidyl-tRNA(His) + AMP + diphosphate + H(+). The sequence is that of Histidine--tRNA ligase from Rhodococcus erythropolis (strain PR4 / NBRC 100887).